The sequence spans 1033 residues: PDZ domain-containing protein 7 (1033 aa).

2 consecutive PDZ domains span residues 86 to 168 (SVRV…RMGR) and 210 to 293 (IVHL…ETGR). The segment covering 323–344 (ESSSSVSSCASSAPYSSGSLPS) has biased composition (low complexity). Disordered stretches follow at residues 323–380 (ESSS…GGRV), 444–464 (KQQRKKEKSGSPGEKGALQRS), 754–864 (EPLS…KTVT), and 943–1033 (MELV…PRIP). Over residues 770-784 (AQSRSRSRSRSRSRS) the composition is skewed to basic residues. Positions 785-797 (SRGQGKSPGRRSP) are enriched in low complexity. One can recognise a PDZ 3 domain in the interval 862-934 (TVTLSKMKQS…QRAVDTIRRA (73 aa)). Residues 991–1000 (PEPPTNPQTP) show a composition bias toward pro residues.

In terms of assembly, homodimerizes (via PDZ2 domain). Component of USH2 complex, composed of ADGRV1, PDZD7, USH2A and WHRN. Interacts (via PDZ domains) with WHRN; the interaction is direct. Interacts with USH1G. Interacts with ADGRV1 (via the cytoplasmic region). Interacts with USH2A (via the cytoplasmic region). Interacts with MYO7A (via MyTH4-FERM domains). In terms of tissue distribution, weakly expressed in the inner ear. Expressed in the retinal pigment epithelium.

The protein localises to the cell projection. It localises to the cilium. Its subcellular location is the nucleus. It is found in the stereocilium. Its function is as follows. In cochlear developing hair cells, essential in organizing the USH2 complex at stereocilia ankle links. Blocks inhibition of adenylate cyclase activity mediated by ADGRV1. This chain is PDZ domain-containing protein 7, found in Homo sapiens (Human).